The following is a 706-amino-acid chain: Fatty acid oxidation complex subunit alpha (706 aa).

Residues methionine 1–proline 188 are enoyl-CoA hydratase. Residues arginine 308–phenylalanine 706 form a 3-hydroxyacyl-CoA dehydrogenase region.

It in the N-terminal section; belongs to the enoyl-CoA hydratase/isomerase family. The protein in the central section; belongs to the 3-hydroxyacyl-CoA dehydrogenase family. In terms of assembly, heterotetramer of two alpha chains (FadJ) and two beta chains (FadI).

The protein resides in the cytoplasm. The enzyme catalyses a (3S)-3-hydroxyacyl-CoA = a (2E)-enoyl-CoA + H2O. It catalyses the reaction a 4-saturated-(3S)-3-hydroxyacyl-CoA = a (3E)-enoyl-CoA + H2O. It carries out the reaction a (3S)-3-hydroxyacyl-CoA + NAD(+) = a 3-oxoacyl-CoA + NADH + H(+). The catalysed reaction is (3S)-3-hydroxybutanoyl-CoA = (3R)-3-hydroxybutanoyl-CoA. It functions in the pathway lipid metabolism; fatty acid beta-oxidation. Catalyzes the formation of a hydroxyacyl-CoA by addition of water on enoyl-CoA. Also exhibits 3-hydroxyacyl-CoA epimerase and 3-hydroxyacyl-CoA dehydrogenase activities. This chain is Fatty acid oxidation complex subunit alpha, found in Shewanella baltica (strain OS155 / ATCC BAA-1091).